Reading from the N-terminus, the 280-residue chain is Large ribosomal subunit protein uL2 (280 aa).

The segment at 226–280 (NPIDHPHGGGEGRTSGGRHPVTPWGKPTKGAKTRNKKKASSQLIIRSRHAKKKGR) is disordered. Composition is skewed to basic residues over residues 254–264 (KGAKTRNKKKA) and 271–280 (RSRHAKKKGR).

The protein belongs to the universal ribosomal protein uL2 family. As to quaternary structure, part of the 50S ribosomal subunit. Forms a bridge to the 30S subunit in the 70S ribosome.

In terms of biological role, one of the primary rRNA binding proteins. Required for association of the 30S and 50S subunits to form the 70S ribosome, for tRNA binding and peptide bond formation. It has been suggested to have peptidyltransferase activity; this is somewhat controversial. Makes several contacts with the 16S rRNA in the 70S ribosome. In Roseobacter denitrificans (strain ATCC 33942 / OCh 114) (Erythrobacter sp. (strain OCh 114)), this protein is Large ribosomal subunit protein uL2.